We begin with the raw amino-acid sequence, 690 residues long: Glycine--tRNA ligase beta subunit (690 aa).

Belongs to the class-II aminoacyl-tRNA synthetase family. Tetramer of two alpha and two beta subunits.

It localises to the cytoplasm. It carries out the reaction tRNA(Gly) + glycine + ATP = glycyl-tRNA(Gly) + AMP + diphosphate. The sequence is that of Glycine--tRNA ligase beta subunit from Desulfitobacterium hafniense (strain Y51).